Here is a 466-residue protein sequence, read N- to C-terminus: 23S rRNA (uracil(1939)-C(5))-methyltransferase RlmD (466 aa).

The region spanning 1-54 (MVDVLNIESLDLEARGIAHRDGKVLFVEGALPGERVTVQTVRRKPSYEIAKVEE) is the TRAM domain. Residues cysteine 67, cysteine 73, cysteine 76, and cysteine 155 each contribute to the [4Fe-4S] cluster site. Positions 264, 293, 298, 314, 342, and 363 each coordinate S-adenosyl-L-methionine. The active-site Nucleophile is cysteine 393.

This sequence belongs to the class I-like SAM-binding methyltransferase superfamily. RNA M5U methyltransferase family. RlmD subfamily.

The enzyme catalyses uridine(1939) in 23S rRNA + S-adenosyl-L-methionine = 5-methyluridine(1939) in 23S rRNA + S-adenosyl-L-homocysteine + H(+). Functionally, catalyzes the formation of 5-methyl-uridine at position 1939 (m5U1939) in 23S rRNA. The sequence is that of 23S rRNA (uracil(1939)-C(5))-methyltransferase RlmD from Bordetella bronchiseptica (strain ATCC BAA-588 / NCTC 13252 / RB50) (Alcaligenes bronchisepticus).